A 299-amino-acid chain; its full sequence is tRNA pseudouridine synthase B (299 aa).

Asp-45 (nucleophile) is an active-site residue.

Belongs to the pseudouridine synthase TruB family. Type 1 subfamily.

The catalysed reaction is uridine(55) in tRNA = pseudouridine(55) in tRNA. Functionally, responsible for synthesis of pseudouridine from uracil-55 in the psi GC loop of transfer RNAs. In Streptomyces griseus subsp. griseus (strain JCM 4626 / CBS 651.72 / NBRC 13350 / KCC S-0626 / ISP 5235), this protein is tRNA pseudouridine synthase B.